Here is a 237-residue protein sequence, read N- to C-terminus: Bax inhibitor 1 (237 aa).

Residues 1 to 29 lie on the Cytoplasmic side of the membrane; it reads MNIFDRKINFDALLKFSHITPSTQQHLKK. Lys-7 participates in a covalent cross-link: Glycyl lysine isopeptide (Lys-Gly) (interchain with G-Cter in ubiquitin). Residues 30–50 form a helical membrane-spanning segment; the sequence is VYASFALCMFVAAAGAYVHVV. The Lumenal portion of the chain corresponds to 51 to 52; the sequence is TH. A helical membrane pass occupies residues 53 to 73; that stretch reads FIQAGLLSALGSLALMIWLMA. Residues 74 to 86 lie on the Cytoplasmic side of the membrane; that stretch reads TPHSHETEQKRLG. A helical membrane pass occupies residues 87–107; sequence LLAGFAFLTGVGLGPALELCI. The Lumenal portion of the chain corresponds to 108 to 112; the sequence is AVNPS. Residues 113 to 133 form a helical membrane-spanning segment; it reads ILPTAFMGTAMIFTCFSLSAL. Topologically, residues 134 to 139 are cytoplasmic; that stretch reads YARRRS. The chain crosses the membrane as a helical span at residues 140–160; sequence YLFLGGILMSAMSLMLLSSLG. At 161-166 the chain is on the lumenal side; that stretch reads NLFFGS. The chain crosses the membrane as a helical span at residues 167–187; sequence IWLFQANLYLGLLVMCGFVLF. Over 188-206 the chain is Cytoplasmic; it reads DTQLIIEKAEHGDKDYIWH. The segment at residues 207 to 227 is an intramembrane region (helical); it reads CVDLFLDFVTLFRKLMLILAF. The Cytoplasmic portion of the chain corresponds to 228–237; sequence NEKDKKKEKK.

The protein belongs to the BI1 family. In terms of assembly, interacts with BCL2. Interacts with BCL2L1. Interacts with ERN1. Ubiquitinated by BFAR, leading to proteasomal degradation. In terms of tissue distribution, highly abundant in adult testis.

Its subcellular location is the endoplasmic reticulum membrane. Its function is as follows. Endoplasmic reticulum (ER)-resident protein that confers cellular protection as an anti-apoptotic protein by limiting multiple stress-inducing pathways surrounding the endoplasmic reticulum and mitochondria. Inhibits the activities of the key sensor for the endoplasmic reticulum unfolded protein response IRE1alpha/ERN1 both directly and by blocking BAX/BAK binding. Modulates ER calcium homeostasis by acting as a calcium-leak channel. Negatively regulates autophagy and autophagosome formation, especially during periods of nutrient deprivation, and reduces cell survival during starvation. The polypeptide is Bax inhibitor 1 (Tmbim6) (Mus musculus (Mouse)).